Reading from the N-terminus, the 90-residue chain is FMRFamide-like neuropeptides 27 (90 aa).

A signal peptide spans 1-24 (MFSFRKFLAFMLIVIALMASFSSA). A propeptide spanning residues 25–36 (QPIDEERPIFME) is cleaved from the precursor. At F61 the chain carries Phenylalanine amide. Residues 65 to 90 (SSSPSDISMAELRAIYGGGPVEYVQL) constitute a propeptide that is removed on maturation.

It belongs to the FARP (FMRFamide related peptide) family.

Its subcellular location is the secreted. Its function is as follows. FMRFamides and FMRFamide-like peptides are neuropeptides. The chain is FMRFamide-like neuropeptides 27 from Caenorhabditis briggsae.